The chain runs to 257 residues: Meiotically up-regulated gene 14 protein (257 aa).

The protein localises to the cytoplasm. It is found in the nucleus. Has a role in meiosis. This is Meiotically up-regulated gene 14 protein (mug14) from Schizosaccharomyces pombe (strain 972 / ATCC 24843) (Fission yeast).